Consider the following 308-residue polypeptide: Porphobilinogen deaminase (308 aa).

S-(dipyrrolylmethanemethyl)cysteine is present on Cys-241.

The protein belongs to the HMBS family. Monomer. The cofactor is dipyrromethane.

The enzyme catalyses 4 porphobilinogen + H2O = hydroxymethylbilane + 4 NH4(+). Its pathway is porphyrin-containing compound metabolism; protoporphyrin-IX biosynthesis; coproporphyrinogen-III from 5-aminolevulinate: step 2/4. Its function is as follows. Tetrapolymerization of the monopyrrole PBG into the hydroxymethylbilane pre-uroporphyrinogen in several discrete steps. The protein is Porphobilinogen deaminase of Staphylococcus epidermidis (strain ATCC 35984 / DSM 28319 / BCRC 17069 / CCUG 31568 / BM 3577 / RP62A).